The sequence spans 327 residues: Undecaprenyl-phosphate 4-deoxy-4-formamido-L-arabinose transferase (327 aa).

Residues 1-235 are Cytoplasmic-facing; the sequence is MFDAAPIKKV…TCLTTTPLRL (235 aa). Residues 236 to 256 form a helical membrane-spanning segment; the sequence is LSLLGSVIAIGGFSLSVLLIV. Residues 257–269 lie on the Periplasmic side of the membrane; that stretch reads LRLALGPQWAAEG. A helical transmembrane segment spans residues 270–290; it reads VFMLFAVLFTFIGAQFIGMGL. At 291 to 327 the chain is on the cytoplasmic side; it reads LGEYIGRIYNDVRARPRYFVQQVIYPESTPFTEESHQ.

It belongs to the glycosyltransferase 2 family.

It localises to the cell inner membrane. The catalysed reaction is UDP-4-deoxy-4-formamido-beta-L-arabinose + di-trans,octa-cis-undecaprenyl phosphate = 4-deoxy-4-formamido-alpha-L-arabinopyranosyl di-trans,octa-cis-undecaprenyl phosphate + UDP. Its pathway is glycolipid biosynthesis; 4-amino-4-deoxy-alpha-L-arabinose undecaprenyl phosphate biosynthesis; 4-amino-4-deoxy-alpha-L-arabinose undecaprenyl phosphate from UDP-4-deoxy-4-formamido-beta-L-arabinose and undecaprenyl phosphate: step 1/2. The protein operates within bacterial outer membrane biogenesis; lipopolysaccharide biosynthesis. Functionally, catalyzes the transfer of 4-deoxy-4-formamido-L-arabinose from UDP to undecaprenyl phosphate. The modified arabinose is attached to lipid A and is required for resistance to polymyxin and cationic antimicrobial peptides. This chain is Undecaprenyl-phosphate 4-deoxy-4-formamido-L-arabinose transferase, found in Salmonella agona (strain SL483).